A 176-amino-acid chain; its full sequence is Ribosome maturation factor RimM (176 aa).

One can recognise a PRC barrel domain in the interval 97–176; that stretch reads EDEFYWRDLI…QILVDWDPDF (80 aa).

It belongs to the RimM family. As to quaternary structure, binds ribosomal protein uS19.

It is found in the cytoplasm. In terms of biological role, an accessory protein needed during the final step in the assembly of 30S ribosomal subunit, possibly for assembly of the head region. Essential for efficient processing of 16S rRNA. May be needed both before and after RbfA during the maturation of 16S rRNA. It has affinity for free ribosomal 30S subunits but not for 70S ribosomes. The polypeptide is Ribosome maturation factor RimM (Shewanella sp. (strain ANA-3)).